Reading from the N-terminus, the 312-residue chain is Formimidoylglutamase (312 aa).

Residues His-128, Asp-153, His-155, Asp-157, Asp-240, and Asp-242 each coordinate Mn(2+).

Belongs to the arginase family. Mn(2+) serves as cofactor.

It catalyses the reaction N-formimidoyl-L-glutamate + H2O = formamide + L-glutamate. It participates in amino-acid degradation; L-histidine degradation into L-glutamate; L-glutamate from N-formimidoyl-L-glutamate (hydrolase route): step 1/1. In terms of biological role, catalyzes the conversion of N-formimidoyl-L-glutamate to L-glutamate and formamide. The protein is Formimidoylglutamase of Enterobacter sp. (strain 638).